Consider the following 133-residue polypeptide: C-C motif chemokine 21a (133 aa).

An N-terminal signal peptide occupies residues 1–23 (MAQMMTLSLLSLVLALCIPWTQG). Intrachain disulfides connect Cys-31–Cys-57, Cys-32–Cys-75, and Cys-103–Cys-122. Positions 86–133 (LMRRLDQPPAPGKQSPGCRKNRGTSKSGKKGKGSKGCKRTEQTQPSRG) are disordered. The interval 98 to 133 (KQSPGCRKNRGTSKSGKKGKGSKGCKRTEQTQPSRG) is C-terminal basic extension. A compositionally biased stretch (basic residues) spans 104 to 122 (RKNRGTSKSGKKGKGSKGC).

This sequence belongs to the intercrine beta (chemokine CC) family. In terms of assembly, binds to CCR7 and to CXCR3. Interacts with PDPN; relocalizes PDPN to the basolateral membrane. Interacts with GPR174. In terms of tissue distribution, expressed strongly in lung, spleen, thymus, peripheral and mesentric lymph nodes. Also expressed in the testis, kidney, liver, and heart.

It localises to the secreted. Functionally, inhibits hemopoiesis and stimulates chemotaxis. Chemotactic in vitro for thymocytes and activated T-cells, but not for B-cells, macrophages, or neutrophils. Potent mesangial cell chemoattractant. Shows preferential activity towards naive T-cells. May play a role in mediating homing of lymphocytes to secondary lymphoid organs. This is C-C motif chemokine 21a (Ccl21a) from Mus musculus (Mouse).